Here is a 160-residue protein sequence, read N- to C-terminus: Phosphopantetheine adenylyltransferase (160 aa).

This sequence belongs to the eukaryotic CoaD family.

The protein resides in the cytoplasm. The catalysed reaction is (R)-4'-phosphopantetheine + ATP + H(+) = 3'-dephospho-CoA + diphosphate. It functions in the pathway cofactor biosynthesis; coenzyme A biosynthesis. Its function is as follows. Reversibly transfers an adenylyl group from ATP to 4'-phosphopantetheine, yielding dephospho-CoA (dPCoA) and pyrophosphate. The polypeptide is Phosphopantetheine adenylyltransferase (Pyrococcus furiosus (strain ATCC 43587 / DSM 3638 / JCM 8422 / Vc1)).